The following is a 629-amino-acid chain: tRNA uridine 5-carboxymethylaminomethyl modification enzyme MnmG (629 aa).

Residues 15–20, Val-127, and Ser-182 contribute to the FAD site; that span reads GAGHAG. The interval 203–227 is disordered; sequence TPPRVKSSTIDYSKTEEQPGDDHPR. A compositionally biased stretch (basic and acidic residues) spans 215 to 227; sequence SKTEEQPGDDHPR. 274 to 288 serves as a coordination point for NAD(+); that stretch reads GARYCPSIEDKIVRF. Residue Gln-371 participates in FAD binding.

It belongs to the MnmG family. In terms of assembly, homodimer. Heterotetramer of two MnmE and two MnmG subunits. FAD is required as a cofactor.

Its subcellular location is the cytoplasm. NAD-binding protein involved in the addition of a carboxymethylaminomethyl (cmnm) group at the wobble position (U34) of certain tRNAs, forming tRNA-cmnm(5)s(2)U34. The protein is tRNA uridine 5-carboxymethylaminomethyl modification enzyme MnmG of Listeria welshimeri serovar 6b (strain ATCC 35897 / DSM 20650 / CCUG 15529 / CIP 8149 / NCTC 11857 / SLCC 5334 / V8).